We begin with the raw amino-acid sequence, 149 residues long: Arginine regulator (149 aa).

It belongs to the ArgR family.

Its subcellular location is the cytoplasm. The protein operates within amino-acid degradation; L-arginine degradation via ADI pathway. Functionally, regulates the transcription of the arc operon, involved in arginine catabolism. This chain is Arginine regulator (argR1), found in Bacillus cereus (strain ATCC 10987 / NRS 248).